Here is a 396-residue protein sequence, read N- to C-terminus: Chalcone synthase (396 aa).

Cysteine 169 is a catalytic residue.

The protein belongs to the thiolase-like superfamily. Chalcone/stilbene synthases family.

It catalyses the reaction (E)-4-coumaroyl-CoA + 3 malonyl-CoA + 3 H(+) = 2',4,4',6'-tetrahydroxychalcone + 3 CO2 + 4 CoA. Its pathway is secondary metabolite biosynthesis; flavonoid biosynthesis. Its function is as follows. The primary product of this enzyme is 4,2',4',6'-tetrahydroxychalcone (also termed naringenin-chalcone or chalcone) which can under specific conditions spontaneously isomerize into naringenin. This chain is Chalcone synthase (CHS), found in Pinus sylvestris (Scotch pine).